The following is a 449-amino-acid chain: Omega-amino acid--pyruvate aminotransferase (449 aa).

A substrate-binding site is contributed by tryptophan 60. 119–120 (GS) lines the pyridoxal 5'-phosphate pocket. Residue lysine 288 is modified to N6-(pyridoxal phosphate)lysine. A pyridoxal 5'-phosphate-binding site is contributed by threonine 327. Arginine 414 and glutamine 421 together coordinate substrate.

Belongs to the class-III pyridoxal-phosphate-dependent aminotransferase family. Homotetramer. Requires pyridoxal 5'-phosphate as cofactor.

The catalysed reaction is 3-oxopropanoate + L-alanine = beta-alanine + pyruvate. In terms of biological role, catalyzes transamination between a variety of omega-amino acids, mono and diamines, and pyruvate. Plays a pivotal role in the metabolism of the omega amino acids. The sequence is that of Omega-amino acid--pyruvate aminotransferase from Pseudomonas putida (Arthrobacter siderocapsulatus).